Reading from the N-terminus, the 87-residue chain is MANIKSAKKRAVQSEKARKHNASRRSMMRTFIKKVYAAIEAGDKAAAQKAFNEMQPIVDRQAAKGLIHKNKAARHKANLTAQINKLA.

The disordered stretch occupies residues Met1–Ser26.

Belongs to the bacterial ribosomal protein bS20 family.

Binds directly to 16S ribosomal RNA. The chain is Small ribosomal subunit protein bS20 from Klebsiella pneumoniae (strain 342).